The chain runs to 477 residues: ETS translocation variant 1 (477 aa).

Serine 94 carries the phosphoserine modification. The segment at proline 128–serine 178 is disordered. Phosphoserine; by RPS6KA1 and RPS6KA5 is present on residues serine 191 and serine 216. A Glycyl lysine isopeptide (Lys-Gly) (interchain with G-Cter in SUMO2) cross-link involves residue lysine 317. Positions leucine 335–valine 415 form a DNA-binding region, ETS.

This sequence belongs to the ETS family. Post-translationally, sumoylated. In terms of processing, phosphorylated at Ser-191 and Ser-216 by RPS6KA1 and RPS6KA5; phosphorylation activates transcriptional activity.

It is found in the nucleus. Transcriptional activator that binds to DNA sequences containing the consensus pentanucleotide 5'-CGGA[AT]-3'. Required for olfactory dopaminergic neuron differentiation; may directly activate expression of tyrosine hydroxylase (TH). This is ETS translocation variant 1 (ETV1) from Bos taurus (Bovine).